We begin with the raw amino-acid sequence, 299 residues long: Pyridoxal 5'-phosphate synthase subunit PdxS (299 aa).

Aspartate 29 provides a ligand contact to D-ribose 5-phosphate. Lysine 86 serves as the catalytic Schiff-base intermediate with D-ribose 5-phosphate. Glycine 158 contributes to the D-ribose 5-phosphate binding site. Arginine 170 serves as a coordination point for D-glyceraldehyde 3-phosphate. D-ribose 5-phosphate contacts are provided by residues glycine 219 and 240-241; that span reads GS.

Belongs to the PdxS/SNZ family. In terms of assembly, in the presence of PdxT, forms a dodecamer of heterodimers.

The enzyme catalyses aldehydo-D-ribose 5-phosphate + D-glyceraldehyde 3-phosphate + L-glutamine = pyridoxal 5'-phosphate + L-glutamate + phosphate + 3 H2O + H(+). Its pathway is cofactor biosynthesis; pyridoxal 5'-phosphate biosynthesis. Its function is as follows. Catalyzes the formation of pyridoxal 5'-phosphate from ribose 5-phosphate (RBP), glyceraldehyde 3-phosphate (G3P) and ammonia. The ammonia is provided by the PdxT subunit. Can also use ribulose 5-phosphate and dihydroxyacetone phosphate as substrates, resulting from enzyme-catalyzed isomerization of RBP and G3P, respectively. This Mycobacterium bovis (strain ATCC BAA-935 / AF2122/97) protein is Pyridoxal 5'-phosphate synthase subunit PdxS.